Reading from the N-terminus, the 749-residue chain is uncharacterized protein (749 aa).

A Helicase ATP-binding domain is found at 63–243 (FQYVQKGESI…QLTGKPMRLV (181 aa)). 76-83 (TPTASGKT) is an ATP binding site. Positions 185–188 (DELH) match the DEVH box motif. Positions 276–430 (EVNELAKEFL…SARINPENLI (155 aa)) constitute a Helicase C-terminal domain.

This sequence belongs to the helicase family.

This is an uncharacterized protein from Bacillus subtilis (strain 168).